A 593-amino-acid polypeptide reads, in one-letter code: Aspartate--tRNA ligase (593 aa).

Glu-181 contributes to the L-aspartate binding site. Residues 205 to 208 form an aspartate region; it reads QLYK. Arg-227 is a binding site for L-aspartate. Residues 227–229 and Gln-236 each bind ATP; that span reads RDE. L-aspartate is bound at residue His-455. Glu-489 contacts ATP. L-aspartate is bound at residue Arg-496. 541-544 provides a ligand contact to ATP; sequence GLDR.

This sequence belongs to the class-II aminoacyl-tRNA synthetase family. Type 1 subfamily. Homodimer.

The protein resides in the cytoplasm. The enzyme catalyses tRNA(Asp) + L-aspartate + ATP = L-aspartyl-tRNA(Asp) + AMP + diphosphate. Its function is as follows. Catalyzes the attachment of L-aspartate to tRNA(Asp) in a two-step reaction: L-aspartate is first activated by ATP to form Asp-AMP and then transferred to the acceptor end of tRNA(Asp). In Ruminiclostridium cellulolyticum (strain ATCC 35319 / DSM 5812 / JCM 6584 / H10) (Clostridium cellulolyticum), this protein is Aspartate--tRNA ligase.